A 134-amino-acid chain; its full sequence is uncharacterized protein (134 aa).

This is an uncharacterized protein from Human cytomegalovirus (strain AD169) (HHV-5).